The chain runs to 172 residues: Molybdopterin synthase catalytic subunit (172 aa).

Serine 20 is subject to Phosphoserine. Substrate contacts are provided by residues 127–128 (HR), lysine 143, and 150–152 (KKE).

Belongs to the MoaE family. MOCS2B subfamily. Heterotetramer; composed of 2 small (MOCS2A) and 2 large (MOCS2B) subunits.

It is found in the cytoplasm. The protein resides in the cytosol. The catalysed reaction is 2 [molybdopterin-synthase sulfur-carrier protein]-C-terminal-Gly-aminoethanethioate + cyclic pyranopterin phosphate + H2O = molybdopterin + 2 [molybdopterin-synthase sulfur-carrier protein]-C-terminal Gly-Gly + 2 H(+). The protein operates within cofactor biosynthesis; molybdopterin biosynthesis. Its function is as follows. Catalytic subunit of the molybdopterin synthase complex, a complex that catalyzes the conversion of precursor Z into molybdopterin. Acts by mediating the incorporation of 2 sulfur atoms from thiocarboxylated MOCS2A into precursor Z to generate a dithiolene group. The protein is Molybdopterin synthase catalytic subunit of Pongo abelii (Sumatran orangutan).